Reading from the N-terminus, the 101-residue chain is NADH-quinone oxidoreductase subunit K (101 aa).

Transmembrane regions (helical) follow at residues 4 to 24, 30 to 50, and 61 to 81; these read LTHF…GIFL, IILL…FIAF, and IFVF…LAIL.

It belongs to the complex I subunit 4L family. NDH-1 is composed of 14 different subunits. Subunits NuoA, H, J, K, L, M, N constitute the membrane sector of the complex.

It localises to the cell inner membrane. It carries out the reaction a quinone + NADH + 5 H(+)(in) = a quinol + NAD(+) + 4 H(+)(out). Functionally, NDH-1 shuttles electrons from NADH, via FMN and iron-sulfur (Fe-S) centers, to quinones in the respiratory chain. The immediate electron acceptor for the enzyme in this species is believed to be ubiquinone. Couples the redox reaction to proton translocation (for every two electrons transferred, four hydrogen ions are translocated across the cytoplasmic membrane), and thus conserves the redox energy in a proton gradient. This is NADH-quinone oxidoreductase subunit K from Chromobacterium violaceum (strain ATCC 12472 / DSM 30191 / JCM 1249 / CCUG 213 / NBRC 12614 / NCIMB 9131 / NCTC 9757 / MK).